We begin with the raw amino-acid sequence, 316 residues long: Elongation factor Ts, mitochondrial (316 aa).

The transit peptide at 1 to 18 (MFARAPFVRLLSTTSRNL) directs the protein to the mitochondrion. Positions 245–269 (EAAESVKTQEGLRSQEGHDPNADPV) are disordered.

This sequence belongs to the EF-Ts family.

It is found in the mitochondrion. Its function is as follows. Associates with the EF-Tu.GDP complex and induces the exchange of GDP to GTP. It remains bound to the aminoacyl-tRNA.EF-Tu.GTP complex up to the GTP hydrolysis stage on the ribosome. This Caenorhabditis elegans protein is Elongation factor Ts, mitochondrial.